Consider the following 125-residue polypeptide: Holo-[acyl-carrier-protein] synthase (125 aa).

Mg(2+) contacts are provided by D8 and E57.

It belongs to the P-Pant transferase superfamily. AcpS family. The cofactor is Mg(2+).

It localises to the cytoplasm. The catalysed reaction is apo-[ACP] + CoA = holo-[ACP] + adenosine 3',5'-bisphosphate + H(+). Transfers the 4'-phosphopantetheine moiety from coenzyme A to a Ser of acyl-carrier-protein. This Neisseria meningitidis serogroup A / serotype 4A (strain DSM 15465 / Z2491) protein is Holo-[acyl-carrier-protein] synthase.